A 591-amino-acid chain; its full sequence is Aspartate--tRNA ligase (591 aa).

Glu-176 contributes to the L-aspartate binding site. An aspartate region spans residues 200–203; the sequence is QILK. An L-aspartate-binding site is contributed by Arg-222. ATP contacts are provided by residues 222–224 and Gln-231; that span reads RDE. His-450 contacts L-aspartate. Glu-484 lines the ATP pocket. An L-aspartate-binding site is contributed by Arg-491. An ATP-binding site is contributed by 536–539; it reads GLDR.

This sequence belongs to the class-II aminoacyl-tRNA synthetase family. Type 1 subfamily. In terms of assembly, homodimer.

Its subcellular location is the cytoplasm. The catalysed reaction is tRNA(Asp) + L-aspartate + ATP = L-aspartyl-tRNA(Asp) + AMP + diphosphate. Catalyzes the attachment of L-aspartate to tRNA(Asp) in a two-step reaction: L-aspartate is first activated by ATP to form Asp-AMP and then transferred to the acceptor end of tRNA(Asp). The protein is Aspartate--tRNA ligase of Listeria monocytogenes serotype 4b (strain F2365).